Reading from the N-terminus, the 834-residue chain is Protein EFR3 homolog cmp44E (834 aa).

Residues 120–156 (NLFVESFLRMVQKLLEDSNPNLKIMATNSFVKFANIN) form an HEAT repeat. A helical membrane pass occupies residues 595–612 (LHAISIGLLVLISRVSGI).

This sequence belongs to the EFR3 family. As to expression, expression during embryogenesis is ubiquitous with notably higher levels in the CNS and brain.

Its subcellular location is the membrane. In terms of biological role, an essential gene required for embryogenesis; required for cell viability. This is Protein EFR3 homolog cmp44E (stmA) from Drosophila melanogaster (Fruit fly).